The chain runs to 250 residues: Ubiquinone/menaquinone biosynthesis C-methyltransferase UbiE (250 aa).

S-adenosyl-L-methionine contacts are provided by residues Thr74, Asp94, 122-123, and Ser139; that span reads DA.

Belongs to the class I-like SAM-binding methyltransferase superfamily. MenG/UbiE family.

It carries out the reaction a 2-demethylmenaquinol + S-adenosyl-L-methionine = a menaquinol + S-adenosyl-L-homocysteine + H(+). The enzyme catalyses a 2-methoxy-6-(all-trans-polyprenyl)benzene-1,4-diol + S-adenosyl-L-methionine = a 5-methoxy-2-methyl-3-(all-trans-polyprenyl)benzene-1,4-diol + S-adenosyl-L-homocysteine + H(+). It functions in the pathway quinol/quinone metabolism; menaquinone biosynthesis; menaquinol from 1,4-dihydroxy-2-naphthoate: step 2/2. Its pathway is cofactor biosynthesis; ubiquinone biosynthesis. In terms of biological role, methyltransferase required for the conversion of demethylmenaquinol (DMKH2) to menaquinol (MKH2) and the conversion of 2-polyprenyl-6-methoxy-1,4-benzoquinol (DDMQH2) to 2-polyprenyl-3-methyl-6-methoxy-1,4-benzoquinol (DMQH2). This Dinoroseobacter shibae (strain DSM 16493 / NCIMB 14021 / DFL 12) protein is Ubiquinone/menaquinone biosynthesis C-methyltransferase UbiE.